Reading from the N-terminus, the 1683-residue chain is Genome polyprotein (1683 aa).

At 1–445 (MRCIGISNRD…LHQVFGAIYG (445 aa)) the chain is on the extracellular side. 4 disulfide bridges follow: C3/C30, C60/C121, C74/C105, and C92/C116. The N-linked (GlcNAc...) asparagine; by host glycan is linked to N67. The fusion peptide stretch occupies residues 98 to 111 (DRGWGNGCGLFGKG). N-linked (GlcNAc...) asparagine; by host glycosylation is present at N153. 2 cysteine pairs are disulfide-bonded: C185/C285 and C302/C333. A helical transmembrane segment spans residues 446 to 466 (AAFSGVSWTMKILIGVIITWI). The Cytoplasmic segment spans residues 467–472 (GMNSRS). A helical membrane pass occupies residues 473-493 (TSLSVSLVLVGIVTLYLGVMV). Residues 494 to 915 (QADSGCVVSW…MVGATMTDDI (422 aa)) lie on the Extracellular side of the membrane. 6 disulfide bridges follow: C499–C510, C550–C638, C674–C718, C775–C824, C786–C808, and C807–C811. N702 is a glycosylation site (N-linked (GlcNAc...) asparagine; by host). The helical transmembrane segment at 916 to 940 (GMGVTYLALLAAFRVRPTFAAGLLL) threads the bilayer. At 941–946 (RKLTSK) the chain is on the cytoplasmic side. Residues 947-965 (ELMMTTIGIVLLSQSSIPE) traverse the membrane as a helical segment. At 966-989 (TILELTDALALGMMVLKMVRNMEK) the chain is on the lumenal side. A helical transmembrane segment spans residues 990 to 1010 (YQLAVTIMAILCVPNAVILQN). Residue A1011 is a topological domain, cytoplasmic. The helical transmembrane segment at 1012-1030 (WKVSCTILAVVSVSPLLLT) threads the bilayer. Residues 1031 to 1037 (SSQQKAD) are Lumenal-facing. The helical transmembrane segment at 1038–1058 (WIPLALTIKGLNPTAIFLTTL) threads the bilayer. Over 1059–1683 (SRTSKKRAGV…EFKEFAAGRK (625 aa)) the chain is Cytoplasmic. Residues 1066-1243 (AGVLWDVPSP…EKSIEDNPEI (178 aa)) enclose the Peptidase S7 domain. Residues H1116, D1140, and S1200 each act as charge relay system; for serine protease NS3 activity in the active site. Residues 1245 to 1401 (DDIFRKRRLT…QSNAPIMDEE (157 aa)) form the Helicase ATP-binding domain. Residues 1249–1252 (RKRR) are important for RNA-binding. 1258–1265 (LHPGAGKT) provides a ligand contact to ATP. A DEAH box motif is present at residues 1349–1352 (DEAH). Residues 1411-1582 (SGHEWVTDFK…IFEPEREKVD (172 aa)) enclose the Helicase C-terminal domain.

In terms of assembly, capsid protein C: Homodimer. Interacts (via N-terminus) with host EXOC1 (via C-terminus); this interaction results in EXOC1 degradation through the proteasome degradation pathway. Protein prM: Forms heterodimers with envelope protein E in the endoplasmic reticulum and Golgi. As to quaternary structure, homodimer; in the endoplasmic reticulum and Golgi. Interacts with protein prM. Interacts with non-structural protein 1. Homodimer; Homohexamer when secreted. Interacts with envelope protein E. In terms of assembly, interacts (via N-terminus) with serine protease NS3. Non-structural protein 2B: Forms a heterodimer with serine protease NS3. May form homooligomers. As to quaternary structure, forms a heterodimer with NS2B. Interacts with NS4B. Interacts with unphosphorylated RNA-directed RNA polymerase NS5; this interaction stimulates RNA-directed RNA polymerase NS5 guanylyltransferase activity. Interacts with host SHFL. Post-translationally, specific enzymatic cleavages in vivo yield mature proteins. Cleavages in the lumen of endoplasmic reticulum are performed by host signal peptidase, wereas cleavages in the cytoplasmic side are performed by the Serine protease NS3. Signal cleavage at the 2K-4B site requires a prior NS3 protease-mediated cleavage at the 4A-2K site. In terms of processing, N-glycosylated. The excreted form is glycosylated and this is required for efficient secretion of the protein from infected cells. N-glycosylated. Post-translationally, specific enzymatic cleavages in vivo yield mature proteins. Cleavages in the lumen of endoplasmic reticulum are performed by host signal peptidase, wereas cleavages in the cytoplasmic side are performed by serine protease NS3. Signal cleavage at the 2K-4B site requires a prior NS3 protease-mediated cleavage at the 4A-2K site.

It localises to the virion membrane. The protein localises to the host endoplasmic reticulum membrane. Its subcellular location is the secreted. The catalysed reaction is Selective hydrolysis of -Xaa-Xaa-|-Yaa- bonds in which each of the Xaa can be either Arg or Lys and Yaa can be either Ser or Ala.. The enzyme catalyses a ribonucleoside 5'-triphosphate + H2O = a ribonucleoside 5'-diphosphate + phosphate + H(+). It carries out the reaction ATP + H2O = ADP + phosphate + H(+). In terms of biological role, binds to host cell surface receptor and mediates fusion between viral and cellular membranes. Envelope protein is synthesized in the endoplasmic reticulum in the form of heterodimer with protein prM. They play a role in virion budding in the ER, and the newly formed immature particle is covered with 60 spikes composed of heterodimer between precursor prM and envelope protein E. The virion is transported to the Golgi apparatus where the low pH causes dissociation of PrM-E heterodimers and formation of E homodimers. prM-E cleavage is inefficient, and many virions are only partially matured. These uncleaved prM would play a role in immune evasion. Functionally, involved in immune evasion, pathogenesis and viral replication. Once cleaved off the polyprotein, is targeted to three destinations: the viral replication cycle, the plasma membrane and the extracellular compartment. Essential for viral replication. Required for formation of the replication complex and recruitment of other non-structural proteins to the ER-derived membrane structures. Excreted as a hexameric lipoparticle that plays a role against host immune response. Antagonizing the complement function. Binds to the host macrophages and dendritic cells. Inhibits signal transduction originating from Toll-like receptor 3 (TLR3). Disrupts the host endothelial glycocalyx layer of host pulmonary microvascular endothelial cells, inducing degradation of sialic acid and shedding of heparan sulfate proteoglycans. NS1 induces expression of sialidases, heparanase, and activates cathepsin L, which activates heparanase via enzymatic cleavage. These effects are probably linked to the endothelial hyperpermeability observed in severe dengue disease. Its function is as follows. Component of the viral RNA replication complex that functions in virion assembly and antagonizes the host immune response. In terms of biological role, serine protease subunit NS2B: Required cofactor for the serine protease function of NS3. May have membrane-destabilizing activity and form viroporins. Functionally, displays three enzymatic activities: serine protease, NTPase and RNA helicase. NS3 serine protease, in association with NS2B, performs its autocleavage and cleaves the polyprotein at dibasic sites in the cytoplasm: C-prM, NS2A-NS2B, NS2B-NS3, NS3-NS4A, NS4A-2K and NS4B-NS5. NS3 RNA helicase binds RNA and unwinds dsRNA in the 3' to 5' direction. The chain is Genome polyprotein from Aedimorphus (Red guenon).